Reading from the N-terminus, the 325-residue chain is Serine/threonine-protein kinase CtkA (325 aa).

ATP is bound by residues 21–24 (NGNK), K37, Q72, and 88–90 (KDF). Mg(2+) contacts are provided by N160 and D179. Residue D179 participates in ATP binding. The disordered stretch occupies residues 296 to 325 (QHKQAHSNPYDNADDLDNSNEYTPTPKRRR).

Post-translationally, autophosphorylates on either Thr-3 or Thr-7.

The protein localises to the secreted. The protein resides in the host cytoplasm. It localises to the host cytosol. Its subcellular location is the host nucleus. The catalysed reaction is L-seryl-[protein] + ATP = O-phospho-L-seryl-[protein] + ADP + H(+). The enzyme catalyses L-threonyl-[protein] + ATP = O-phospho-L-threonyl-[protein] + ADP + H(+). Virulence factor acting as a pro-inflammatory protein that induces the secretion of the pro-inflammatory cytokines TNF-alpha (tumor necrosis factor-alpha) and IL-8 (interleukin-8) from human macrophages, as well as enhanced translocation of the transcription factor NF-kappa-B complex in macrophages. Is a kinase capable of autophosphorylating itself at a threonine residue near the N-terminus. Also leads to enhanced phosphorylation of the NF-kappa-B p65 subunit (RELA) at 'Ser-276' in human epithelial cancer cells; its kinase activity is required for this enhanced phosphorylation that up-regulates NF-kappa-B activity, but it does not directly phosphorylate this protein. Thus, the kinase activity of CtkA may play an important role in the induction of host inflammatory responses during H.pylori infection. This Helicobacter pylori (strain J99 / ATCC 700824) (Campylobacter pylori J99) protein is Serine/threonine-protein kinase CtkA (ctkA).